A 179-amino-acid polypeptide reads, in one-letter code: Large ribosomal subunit protein uL5 (179 aa).

Belongs to the universal ribosomal protein uL5 family. In terms of assembly, part of the 50S ribosomal subunit; part of the 5S rRNA/L5/L18/L25 subcomplex. Contacts the 5S rRNA and the P site tRNA. Forms a bridge to the 30S subunit in the 70S ribosome.

This is one of the proteins that bind and probably mediate the attachment of the 5S RNA into the large ribosomal subunit, where it forms part of the central protuberance. In the 70S ribosome it contacts protein S13 of the 30S subunit (bridge B1b), connecting the 2 subunits; this bridge is implicated in subunit movement. Contacts the P site tRNA; the 5S rRNA and some of its associated proteins might help stabilize positioning of ribosome-bound tRNAs. The protein is Large ribosomal subunit protein uL5 of Paramagnetospirillum magneticum (strain ATCC 700264 / AMB-1) (Magnetospirillum magneticum).